An 81-amino-acid chain; its full sequence is Small ribosomal subunit protein bS16 (81 aa).

It belongs to the bacterial ribosomal protein bS16 family.

The protein is Small ribosomal subunit protein bS16 of Acetivibrio thermocellus (strain ATCC 27405 / DSM 1237 / JCM 9322 / NBRC 103400 / NCIMB 10682 / NRRL B-4536 / VPI 7372) (Clostridium thermocellum).